The primary structure comprises 343 residues: F17e-G fimbrial adhesin (343 aa).

The N-terminal stretch at 1-22 is a signal peptide; the sequence is MTNFYKVFLAVFILVCCNISHA. The receptor-binding lectin domain stretch occupies residues 23-199; the sequence is AVSFIGSTEN…LNPFTLNDTV (177 aa). A carbohydrate is bound by residues 65-66, 110-111, and 138-141; these read AN, DT, and STQG. Cysteine 75 and cysteine 132 are joined by a disulfide. The tract at residues 200–343 is fimbrillin-binding domain; it reads TSCRLLTPSA…GISTFTFSYQ (144 aa). The segment at 287-307 is disordered; it reads LKFGPDSPVKGNENQWQLSTG. Positions 298–307 are enriched in polar residues; sequence NENQWQLSTG.

The protein belongs to the fimbrial protein family.

The protein localises to the fimbrium. Essential fimbrial adhesion factor that mediates binding to N-acetylglucosamine-containing receptors in the host intestinal microvilli, leading to colonization of the intestinal tissue, and diarrhea or septicemia. Also confers adhesiveness to laminin and basement membranes. The protein is F17e-G fimbrial adhesin (f17eG) of Escherichia coli.